The primary structure comprises 108 residues: Thiosulfate sulfurtransferase GlpE (108 aa).

In terms of domain architecture, Rhodanese spans 17 to 105; that stretch reads VSQSAILVDV…WLREFPQAIT (89 aa). Cysteine 65 acts as the Cysteine persulfide intermediate in catalysis.

Belongs to the GlpE family.

It localises to the cytoplasm. It catalyses the reaction thiosulfate + hydrogen cyanide = thiocyanate + sulfite + 2 H(+). The catalysed reaction is thiosulfate + [thioredoxin]-dithiol = [thioredoxin]-disulfide + hydrogen sulfide + sulfite + 2 H(+). Functionally, transferase that catalyzes the transfer of sulfur from thiosulfate to thiophilic acceptors such as cyanide or dithiols. May function in a CysM-independent thiosulfate assimilation pathway by catalyzing the conversion of thiosulfate to sulfite, which can then be used for L-cysteine biosynthesis. This Proteus mirabilis (strain HI4320) protein is Thiosulfate sulfurtransferase GlpE.